The primary structure comprises 694 residues: Methionine--tRNA ligase (694 aa).

The 'HIGH' region signature appears at 12-22 (PYANGPLHLGH). Cys143, Cys146, Cys156, and Cys159 together coordinate Zn(2+). The 'KMSKS' region motif lies at 330–334 (KMSKS). Lys333 provides a ligand contact to ATP. A compositionally biased stretch (low complexity) spans 550–573 (MAAPAAPATTTKPAPSKADAKPAA). A disordered region spans residues 550–582 (MAAPAAPATTTKPAPSKADAKPAAVANPESQTT). In terms of domain architecture, tRNA-binding spans 591–694 (DFAKLDLRIG…SGAQPGMPVR (104 aa)).

It belongs to the class-I aminoacyl-tRNA synthetase family. MetG type 1 subfamily. In terms of assembly, homodimer. Zn(2+) is required as a cofactor.

It is found in the cytoplasm. The catalysed reaction is tRNA(Met) + L-methionine + ATP = L-methionyl-tRNA(Met) + AMP + diphosphate. Its function is as follows. Is required not only for elongation of protein synthesis but also for the initiation of all mRNA translation through initiator tRNA(fMet) aminoacylation. The sequence is that of Methionine--tRNA ligase from Xanthomonas euvesicatoria pv. vesicatoria (strain 85-10) (Xanthomonas campestris pv. vesicatoria).